Consider the following 641-residue polypeptide: Probable potassium transport system protein Kup (641 aa).

A compositionally biased stretch (polar residues) spans Met-1–Gly-14. Residues Met-1–Asp-20 are disordered. Transmembrane regions (helical) follow at residues Leu-29–Phe-49, Ile-69–Ile-89, Val-120–Pro-140, Pro-156–Val-176, Phe-188–Ile-208, Val-236–His-256, Phe-267–Leu-287, Leu-307–Phe-327, Val-355–Phe-375, Ala-384–Met-404, Trp-410–Phe-430, and Ile-437–Thr-457.

It belongs to the HAK/KUP transporter (TC 2.A.72) family.

It is found in the cell inner membrane. The enzyme catalyses K(+)(in) + H(+)(in) = K(+)(out) + H(+)(out). In terms of biological role, transport of potassium into the cell. Likely operates as a K(+):H(+) symporter. This chain is Probable potassium transport system protein Kup, found in Nitrosomonas eutropha (strain DSM 101675 / C91 / Nm57).